The sequence spans 136 residues: ATP synthase F(0) complex subunit C1, mitochondrial (136 aa).

Residues Met-1–Arg-61 constitute a mitochondrion transit peptide. Residues Val-77–Tyr-97 traverse the membrane as a helical segment. At Lys-104 the chain carries N6,N6,N6-trimethyllysine. The helical transmembrane segment at Ile-112 to Ile-132 threads the bilayer.

The protein belongs to the ATPase C chain family. As to quaternary structure, homooctamer; the c-ring consists of eight c subunits forming a circle, and each subunit adopts a hairpin shape. Component of the ATP synthase complex composed at least of ATP5F1A/subunit alpha, ATP5F1B/subunit beta, ATP5MC1/subunit c (homooctomer), MT-ATP6/subunit a, MT-ATP8/subunit 8, ATP5ME/subunit e, ATP5MF/subunit f, ATP5MG/subunit g, ATP5MK/subunit k, ATP5MJ/subunit j, ATP5F1C/subunit gamma, ATP5F1D/subunit delta, ATP5F1E/subunit epsilon, ATP5PF/subunit F6, ATP5PB/subunit b, ATP5PD/subunit d, ATP5PO/subunit OSCP. ATP synthase complex consists of a soluble F(1) head domain (subunits alpha(3) and beta(3)) - the catalytic core - and a membrane F(0) domain - the membrane proton channel (subunits c, a, 8, e, f, g, k and j). These two domains are linked by a central stalk (subunits gamma, delta, and epsilon) rotating inside the F1 region and a stationary peripheral stalk (subunits F6, b, d, and OSCP). Interacts with TMEM70 (homooligomer form); this interaction facilitates the oligomer formation of subunit c/ATP5MC1 (c-ring) and the c-ring membrane insertion and also protects ATP5MC1 against intramitochondrial proteolysis. Trimethylated by ATPSCKMT at Lys-104. Methylation is required for proper incorporation of the C subunit into the ATP synthase complex and mitochondrial respiration.

It is found in the mitochondrion membrane. The enzyme catalyses H(+)(in) = H(+)(out). Functionally, subunit c, of the mitochondrial membrane ATP synthase complex (F(1)F(0) ATP synthase or Complex V) that produces ATP from ADP in the presence of a proton gradient across the membrane which is generated by electron transport complexes of the respiratory chain. ATP synthase complex consist of a soluble F(1) head domain - the catalytic core - and a membrane F(1) domain - the membrane proton channel. These two domains are linked by a central stalk rotating inside the F(1) region and a stationary peripheral stalk. During catalysis, ATP synthesis in the catalytic domain of F(1) is coupled via a rotary mechanism of the central stalk subunits to proton translocation. With the subunit a (MT-ATP6), forms the proton-conducting channel in the F(0) domain, that contains two crucial half-channels (inlet and outlet) that facilitate proton movement from the mitochondrial intermembrane space (IMS) into the matrix. Protons are taken up via the inlet half-channel and released through the outlet half-channel, following a Grotthuss mechanism. This Sus scrofa (Pig) protein is ATP synthase F(0) complex subunit C1, mitochondrial.